The following is a 213-amino-acid chain: Large ribosomal subunit protein uL3 (213 aa).

An N5-methylglutamine modification is found at Gln-151.

The protein belongs to the universal ribosomal protein uL3 family. In terms of assembly, part of the 50S ribosomal subunit. Forms a cluster with proteins L14 and L19. Post-translationally, methylated by PrmB.

In terms of biological role, one of the primary rRNA binding proteins, it binds directly near the 3'-end of the 23S rRNA, where it nucleates assembly of the 50S subunit. The protein is Large ribosomal subunit protein uL3 of Rhizobium etli (strain ATCC 51251 / DSM 11541 / JCM 21823 / NBRC 15573 / CFN 42).